Consider the following 144-residue polypeptide: 3-dehydroquinate dehydratase (144 aa).

Catalysis depends on Y23, which acts as the Proton acceptor. Positions 74, 80, and 87 each coordinate substrate. The Proton donor role is filled by H100. Residues 101 to 102 (LS) and R111 each bind substrate.

Belongs to the type-II 3-dehydroquinase family. Homododecamer.

The catalysed reaction is 3-dehydroquinate = 3-dehydroshikimate + H2O. Its pathway is metabolic intermediate biosynthesis; chorismate biosynthesis; chorismate from D-erythrose 4-phosphate and phosphoenolpyruvate: step 3/7. Functionally, catalyzes a trans-dehydration via an enolate intermediate. In Haemophilus ducreyi (strain 35000HP / ATCC 700724), this protein is 3-dehydroquinate dehydratase.